The following is a 264-amino-acid chain: ATP synthase subunit a (264 aa).

The next 7 membrane-spanning stretches (helical) occupy residues 29–49 (TWHIDSLLFSVGLGVLFLWIF), 90–110 (IAPLALTIFVWVFMMNFMDMI), 111–131 (PVDWLPSLALLAGVEYLKVVP), 134–154 (DVNITFSLAIGVFVLIIYYSI), 177–197 (IPVNLLLESVTLIAKPISLAL), 208–228 (LIFILIALMYSANWAMATLGV), and 235–255 (LIFHILVITLQAFIFMMLTIV).

It belongs to the ATPase A chain family. As to quaternary structure, F-type ATPases have 2 components, CF(1) - the catalytic core - and CF(0) - the membrane proton channel. CF(1) has five subunits: alpha(3), beta(3), gamma(1), delta(1), epsilon(1). CF(0) has three main subunits: a(1), b(2) and c(9-12). The alpha and beta chains form an alternating ring which encloses part of the gamma chain. CF(1) is attached to CF(0) by a central stalk formed by the gamma and epsilon chains, while a peripheral stalk is formed by the delta and b chains.

It localises to the cell inner membrane. In terms of biological role, key component of the proton channel; it plays a direct role in the translocation of protons across the membrane. The chain is ATP synthase subunit a from Shewanella denitrificans (strain OS217 / ATCC BAA-1090 / DSM 15013).